The primary structure comprises 470 residues: Argininosuccinate synthase (470 aa).

Residues 17–25 and Ala-43 each bind ATP; that span reads AFSGGLDTS. Tyr-99 lines the L-citrulline pocket. 2 residues coordinate ATP: Gly-129 and Thr-131. L-aspartate-binding residues include Thr-131, Asn-135, and Asp-136. Asn-135 contacts L-citrulline. ATP is bound at residue Asp-136. L-citrulline contacts are provided by Arg-139 and Ser-192. ATP is bound at residue Asp-194. Residues Thr-201, Glu-203, and Glu-280 each contribute to the L-citrulline site. The tract at residues 448-470 is disordered; that stretch reads IASRGESSGDELLDRAAMESGTD.

This sequence belongs to the argininosuccinate synthase family. Type 2 subfamily. As to quaternary structure, homotetramer.

The protein resides in the cytoplasm. The enzyme catalyses L-citrulline + L-aspartate + ATP = 2-(N(omega)-L-arginino)succinate + AMP + diphosphate + H(+). The protein operates within amino-acid biosynthesis; L-arginine biosynthesis; L-arginine from L-ornithine and carbamoyl phosphate: step 2/3. This Kineococcus radiotolerans (strain ATCC BAA-149 / DSM 14245 / SRS30216) protein is Argininosuccinate synthase.